Consider the following 143-residue polypeptide: Ribosome-binding factor A (143 aa).

The segment at 123-143 is disordered; the sequence is DKSLQENYKQNDKETKAEKLR.

It belongs to the RbfA family. In terms of assembly, monomer. Binds 30S ribosomal subunits, but not 50S ribosomal subunits or 70S ribosomes.

It is found in the cytoplasm. In terms of biological role, one of several proteins that assist in the late maturation steps of the functional core of the 30S ribosomal subunit. Associates with free 30S ribosomal subunits (but not with 30S subunits that are part of 70S ribosomes or polysomes). Required for efficient processing of 16S rRNA. May interact with the 5'-terminal helix region of 16S rRNA. This is Ribosome-binding factor A from Francisella tularensis subsp. novicida (strain U112).